Reading from the N-terminus, the 520-residue chain is Cobyric acid synthase (520 aa).

The GATase cobBQ-type domain maps to 254-465 (ELDIAVVRLP…IHGILDNDGL (212 aa)). The active-site Nucleophile is the Cys-335. His-457 is an active-site residue.

This sequence belongs to the CobB/CobQ family. CobQ subfamily.

The protein operates within cofactor biosynthesis; adenosylcobalamin biosynthesis. Its function is as follows. Catalyzes amidations at positions B, D, E, and G on adenosylcobyrinic A,C-diamide. NH(2) groups are provided by glutamine, and one molecule of ATP is hydrogenolyzed for each amidation. The sequence is that of Cobyric acid synthase from Sorangium cellulosum (strain So ce56) (Polyangium cellulosum (strain So ce56)).